We begin with the raw amino-acid sequence, 356 residues long: ATP-dependent 6-phosphofructokinase (356 aa).

ATP contacts are provided by residues Gly-15, 78 to 79 (KG), and 115 to 118 (GEGT). Mg(2+) is bound at residue Glu-116. Substrate contacts are provided by residues 138 to 140 (TID), Arg-175, 182 to 184 (MGR), Glu-235, Arg-272, and 278 to 281 (HLQR). Asp-140 acts as the Proton acceptor in catalysis.

The protein belongs to the phosphofructokinase type A (PFKA) family. Mixed-substrate PFK group III subfamily. As to quaternary structure, homodimer or homotetramer. Requires Mg(2+) as cofactor.

It is found in the cytoplasm. The catalysed reaction is beta-D-fructose 6-phosphate + ATP = beta-D-fructose 1,6-bisphosphate + ADP + H(+). The protein operates within carbohydrate degradation; glycolysis; D-glyceraldehyde 3-phosphate and glycerone phosphate from D-glucose: step 3/4. Functionally, catalyzes the phosphorylation of D-fructose 6-phosphate to fructose 1,6-bisphosphate by ATP, the first committing step of glycolysis. In Chloroflexus aurantiacus (strain ATCC 29366 / DSM 635 / J-10-fl), this protein is ATP-dependent 6-phosphofructokinase.